Here is a 401-residue protein sequence, read N- to C-terminus: L-rhamnonate dehydratase (401 aa).

Positions 29 and 55 each coordinate substrate. Mg(2+) contacts are provided by D222, E248, and E276. H325 serves as the catalytic Proton acceptor. E345 is a substrate binding site.

It belongs to the mandelate racemase/muconate lactonizing enzyme family. RhamD subfamily. In terms of assembly, homooctamer; tetramer of dimers. Requires Mg(2+) as cofactor.

It carries out the reaction L-rhamnonate = 2-dehydro-3-deoxy-L-rhamnonate + H2O. Catalyzes the dehydration of L-rhamnonate to 2-keto-3-deoxy-L-rhamnonate (KDR). Can also dehydrate L-lyxonate, L-mannonate and D-gulonate, although less efficiently, but not 2-keto-4-hydroxyheptane-1,7-dioate. In Escherichia coli (strain K12), this protein is L-rhamnonate dehydratase (rhmD).